A 170-amino-acid polypeptide reads, in one-letter code: Adenine phosphoribosyltransferase (170 aa).

This sequence belongs to the purine/pyrimidine phosphoribosyltransferase family. Homodimer.

The protein resides in the cytoplasm. The catalysed reaction is AMP + diphosphate = 5-phospho-alpha-D-ribose 1-diphosphate + adenine. It functions in the pathway purine metabolism; AMP biosynthesis via salvage pathway; AMP from adenine: step 1/1. Catalyzes a salvage reaction resulting in the formation of AMP, that is energically less costly than de novo synthesis. The sequence is that of Adenine phosphoribosyltransferase from Bacillus licheniformis (strain ATCC 14580 / DSM 13 / JCM 2505 / CCUG 7422 / NBRC 12200 / NCIMB 9375 / NCTC 10341 / NRRL NRS-1264 / Gibson 46).